The following is a 286-amino-acid chain: Bifunctional protein FolD (286 aa).

166–168 is a binding site for NADP(+); that stretch reads GAS.

The protein belongs to the tetrahydrofolate dehydrogenase/cyclohydrolase family. In terms of assembly, homodimer.

It carries out the reaction (6R)-5,10-methylene-5,6,7,8-tetrahydrofolate + NADP(+) = (6R)-5,10-methenyltetrahydrofolate + NADPH. It catalyses the reaction (6R)-5,10-methenyltetrahydrofolate + H2O = (6R)-10-formyltetrahydrofolate + H(+). It participates in one-carbon metabolism; tetrahydrofolate interconversion. Its function is as follows. Catalyzes the oxidation of 5,10-methylenetetrahydrofolate to 5,10-methenyltetrahydrofolate and then the hydrolysis of 5,10-methenyltetrahydrofolate to 10-formyltetrahydrofolate. In Idiomarina loihiensis (strain ATCC BAA-735 / DSM 15497 / L2-TR), this protein is Bifunctional protein FolD.